The chain runs to 127 residues: MKKALWLLLAAVPVVLVACGGSDDDKQTAQVDYLALPGDAKLDTRSVDYKCENGRKFTVQYLNKGDNSLAVVPVSDNSTLVFSNVISASGAKYAAGQYIWWTKGEEATLYGDWKGGEPTDGVACKER.

A signal peptide spans 1–18 (MKKALWLLLAAVPVVLVA). Cys-19 is lipidated: N-palmitoyl cysteine. The S-diacylglycerol cysteine moiety is linked to residue Cys-19. Cys-51 and Cys-124 are disulfide-bonded.

It belongs to the MliC family. Type 2 subfamily. Homodimer.

The protein localises to the cell outer membrane. Functionally, specifically inhibits C-type lysozymes. The chain is Membrane-bound lysozyme inhibitor of C-type lysozyme from Pseudomonas aeruginosa (strain ATCC 15692 / DSM 22644 / CIP 104116 / JCM 14847 / LMG 12228 / 1C / PRS 101 / PAO1).